Here is a 517-residue protein sequence, read N- to C-terminus: Crotonobetaine/carnitine--CoA ligase (517 aa).

It belongs to the ATP-dependent AMP-binding enzyme family.

The enzyme catalyses 4-(trimethylamino)butanoate + ATP + CoA = 4-(trimethylamino)butanoyl-CoA + AMP + diphosphate. It catalyses the reaction crotonobetaine + ATP + CoA = crotonobetainyl-CoA + AMP + diphosphate. It carries out the reaction (R)-carnitine + ATP + CoA = (R)-carnitinyl-CoA + AMP + diphosphate. It functions in the pathway amine and polyamine metabolism; carnitine metabolism. Functionally, catalyzes the transfer of CoA to carnitine, generating the initial carnitinyl-CoA needed for the CaiB reaction cycle. Also has activity toward crotonobetaine and gamma-butyrobetaine. In Shigella sonnei (strain Ss046), this protein is Crotonobetaine/carnitine--CoA ligase.